Reading from the N-terminus, the 1077-residue chain is Histone deacetylase 4 (1077 aa).

A coiled-coil region spans residues 66 to 169 (REQQLQQELL…GKESAVASTE (104 aa)). The interval 117-312 (MLAMKHQQEL…NSSSGNVSTE (196 aa)) is interaction with MEF2A. The segment covering 132-162 (KLERHRQEQELEKQHREQKLQQLKNKEKGKE) has biased composition (basic and acidic residues). 3 disordered regions span residues 132-167 (KLER…AVAS), 204-225 (KTQH…ASYN), and 239-327 (PLRK…AETS). Positions 205–224 (TQHSSLDQSSPPQSGVSASY) are enriched in polar residues. Phosphoserine is present on S209. At S245 the chain carries Phosphoserine; by CaMK4 and SIK1. Residues 258–273 (KVAERRSSPLLRRKDG) show a composition bias toward basic and acidic residues. Over residues 289–310 (SACSSAPGSGPSSPNSSSGNVS) the composition is skewed to low complexity. Positions 348–353 (PSLPNI) match the PxLPxI/L motif; mediates interaction with ANKRA2 and 14-3-3 proteins motif. S349 bears the Phosphoserine mark. S466 bears the Phosphoserine; by CaMK4 and SIK1 mark. Disordered regions lie at residues 508-530 (SKPS…ELRE), 542-582 (RLPG…RPAT), and 623-646 (RPLS…EPPT). Over residues 515–530 (RQPESHPEETEEELRE) the composition is skewed to basic and acidic residues. K557 participates in a covalent cross-link: Glycyl lysine isopeptide (Lys-Gly) (interchain with G-Cter in SUMO). S563, S630, and S631 each carry phosphoserine. The span at 627 to 639 (RAQSSPASATFPM) shows a compositional bias: polar residues. The interval 653 to 1077 (GLVYDTLMLK…EEPMEEEPPL (425 aa)) is histone deacetylase. Residues C665, C667, H673, and C744 each contribute to the Zn(2+) site. Residue H796 is part of the active site. A Nuclear export signal motif is present at residues 1044 to 1077 (EEAETVTAMASLSVGVKPAEKRSEEEPMEEEPPL). A disordered region spans residues 1052 to 1077 (MASLSVGVKPAEKRSEEEPMEEEPPL).

This sequence belongs to the histone deacetylase family. HD type 2 subfamily. In terms of assembly, homodimer. Homodimerization via its N-terminal domain. Interacts with HDAC7. Interacts with MEF2A, MEF2C, MEF2D, MORC2 and NR2C1. Interacts with a 14-3-3 chaperone proteins in a phosphorylation dependent manner. Interacts with 14-3-3 protein YWHAB. Interacts with KDM5B and AHRR. Interacts with BTBD14B. Interacts with MYOCD. Interacts (via PxLPxI/L motif) with ANKRA2 (via ankyrin repeats). Interacts with CUL7 (as part of the 3M complex); negatively regulated by ANKRA2. Interacts with EP300 in the presence of TFAP2C. Interacts with HSPA1A and HSPA1B leading to their deacetylation at 'Lys-77'. Interacts with ZBTB7B; the interaction allows the recruitment of HDAC4 on CD8 loci for deacetylation and possible inhibition of CD8 genes expression. Interacts with DHX36. Interacts with SIK3; this interaction leads to HDAC4 retention in the cytoplasm. Post-translationally, phosphorylated by CaMK4 at Ser-245, Ser-466 and Ser-630. Phosphorylation at other residues by CaMK2D is required for the interaction with 14-3-3. Phosphorylation at Ser-349, within the PxLPxI/L motif, impairs the binding of ANKRA2 but generates a high-affinity docking site for 14-3-3. Sumoylation on Lys-557 is promoted by the E3 SUMO-protein ligase RANBP2, and prevented by phosphorylation by CaMK4.

Its subcellular location is the nucleus. The protein resides in the cytoplasm. It catalyses the reaction N(6)-acetyl-L-lysyl-[histone] + H2O = L-lysyl-[histone] + acetate. In terms of biological role, responsible for the deacetylation of lysine residues on the N-terminal part of the core histones (H2A, H2B, H3 and H4). Histone deacetylation gives a tag for epigenetic repression and plays an important role in transcriptional regulation, cell cycle progression and developmental events. Histone deacetylases act via the formation of large multiprotein complexes. Involved in muscle maturation via its interaction with the myocyte enhancer factors such as MEF2A, MEF2C and MEF2D. Deacetylates HSPA1A and HSPA1B at 'Lys-77' leading to their preferential binding to co-chaperone STUB1. The sequence is that of Histone deacetylase 4 (Hdac4) from Rattus norvegicus (Rat).